A 36-amino-acid chain; its full sequence is Photosystem I reaction center subunit VIII (36 aa).

The helical transmembrane segment at 9-29 threads the bilayer; sequence IFVPLVGLVFPAIAMASLSLY.

Belongs to the PsaI family.

Its subcellular location is the plastid. The protein localises to the chloroplast thylakoid membrane. May help in the organization of the PsaL subunit. This is Photosystem I reaction center subunit VIII from Phalaenopsis aphrodite subsp. formosana (Moth orchid).